The primary structure comprises 158 residues: ATP synthase subunit beta, mitochondrial (158 aa).

Belongs to the ATPase alpha/beta chains family. As to quaternary structure, F-type ATPases have 2 components, CF(1) - the catalytic core - and CF(0) - the membrane proton channel. CF(1) has five subunits: alpha(3), beta(3), gamma(1), delta(1), epsilon(1). CF(0) has three main subunits: a, b and c.

The protein resides in the mitochondrion. Its subcellular location is the mitochondrion inner membrane. It carries out the reaction ATP + H2O + 4 H(+)(in) = ADP + phosphate + 5 H(+)(out). Mitochondrial membrane ATP synthase (F(1)F(0) ATP synthase or Complex V) produces ATP from ADP in the presence of a proton gradient across the membrane which is generated by electron transport complexes of the respiratory chain. F-type ATPases consist of two structural domains, F(1) - containing the extramembraneous catalytic core, and F(0) - containing the membrane proton channel, linked together by a central stalk and a peripheral stalk. During catalysis, ATP synthesis in the catalytic domain of F(1) is coupled via a rotary mechanism of the central stalk subunits to proton translocation. Subunits alpha and beta form the catalytic core in F(1). Rotation of the central stalk against the surrounding alpha(3)beta(3) subunits leads to hydrolysis of ATP in three separate catalytic sites on the beta subunits. This is ATP synthase subunit beta, mitochondrial from Schizaphis graminum (Green bug aphid).